The sequence spans 749 residues: Formate acetyltransferase (749 aa).

The region spanning 3–619 is the PFL domain; that stretch reads ETNKNHATAW…KTGNTPDGRK (617 aa). C413 (S-acetylcysteine intermediate) is an active-site residue. C414 (cysteine radical intermediate) is an active-site residue. In terms of domain architecture, Glycine radical spans 626–749; that stretch reads PGANPMHGRD…VISRTFHESM (124 aa). The residue at position 724 (G724) is a Glycine radical.

Belongs to the glycyl radical enzyme (GRE) family. PFL subfamily. In terms of assembly, homodimer.

Its subcellular location is the cytoplasm. It carries out the reaction formate + acetyl-CoA = pyruvate + CoA. It participates in fermentation; pyruvate fermentation; formate from pyruvate: step 1/1. Catalyzes the conversion of pyruvate to formate and acetyl-CoA. In Staphylococcus aureus (strain USA300), this protein is Formate acetyltransferase (pflB).